The primary structure comprises 64 residues: Large ribosomal subunit protein bL28 (64 aa).

The protein belongs to the bacterial ribosomal protein bL28 family.

The protein is Large ribosomal subunit protein bL28 of Desulfotalea psychrophila (strain LSv54 / DSM 12343).